Reading from the N-terminus, the 372-residue chain is Protein-glutamate methylesterase/protein-glutamine glutaminase (372 aa).

The 119-residue stretch at 5–123 (RVLIVDDSAL…SANLTTVSET (119 aa)) folds into the Response regulatory domain. A 4-aspartylphosphate modification is found at Asp-56. Residues 140 to 151 (GTRSTDTTNSFS) are compositionally biased toward polar residues. The tract at residues 140–177 (GTRSTDTTNSFSEPFKSTIPKPMTAAEPQKEEKPTPQR) is disordered. The segment covering 167 to 177 (PQKEEKPTPQR) has biased composition (basic and acidic residues). The CheB-type methylesterase domain occupies 178–364 (EHGNIQIIAI…VSLDNMAAAI (187 aa)). Catalysis depends on residues Ser-190, His-217, and Asp-313.

Belongs to the CheB family. In terms of processing, phosphorylated by CheA. Phosphorylation of the N-terminal regulatory domain activates the methylesterase activity.

Its subcellular location is the cytoplasm. It carries out the reaction [protein]-L-glutamate 5-O-methyl ester + H2O = L-glutamyl-[protein] + methanol + H(+). The catalysed reaction is L-glutaminyl-[protein] + H2O = L-glutamyl-[protein] + NH4(+). Functionally, involved in chemotaxis. Part of a chemotaxis signal transduction system that modulates chemotaxis in response to various stimuli. Catalyzes the demethylation of specific methylglutamate residues introduced into the chemoreceptors (methyl-accepting chemotaxis proteins or MCP) by CheR. Also mediates the irreversible deamidation of specific glutamine residues to glutamic acid. This chain is Protein-glutamate methylesterase/protein-glutamine glutaminase, found in Treponema denticola (strain ATCC 35405 / DSM 14222 / CIP 103919 / JCM 8153 / KCTC 15104).